The following is a 701-amino-acid chain: UvrABC system protein B (701 aa).

The Helicase ATP-binding domain occupies 28 to 188 (RRIRAGERDV…VDVQYTRNDL (161 aa)). 41–48 (GATGTGKS) is an ATP binding site. The Beta-hairpin signature appears at 94 to 117 (YYDYYQPEAYIAQTDTYIEKDSSI). Residues 432–598 (QIDDLIGEIR…PLRKKIADIL (167 aa)) enclose the Helicase C-terminal domain. A disordered region spans residues 606 to 636 (DDTEAAESVPIGGSGRNSSRGRRAQGEPGRA). Residues 656–691 (ADLIKDLTSQMMVAARDLQFELAARFRDEIADLKKE) form the UVR domain.

The protein belongs to the UvrB family. Forms a heterotetramer with UvrA during the search for lesions. Interacts with UvrC in an incision complex.

The protein resides in the cytoplasm. Functionally, the UvrABC repair system catalyzes the recognition and processing of DNA lesions. A damage recognition complex composed of 2 UvrA and 2 UvrB subunits scans DNA for abnormalities. Upon binding of the UvrA(2)B(2) complex to a putative damaged site, the DNA wraps around one UvrB monomer. DNA wrap is dependent on ATP binding by UvrB and probably causes local melting of the DNA helix, facilitating insertion of UvrB beta-hairpin between the DNA strands. Then UvrB probes one DNA strand for the presence of a lesion. If a lesion is found the UvrA subunits dissociate and the UvrB-DNA preincision complex is formed. This complex is subsequently bound by UvrC and the second UvrB is released. If no lesion is found, the DNA wraps around the other UvrB subunit that will check the other stand for damage. The chain is UvrABC system protein B from Mycobacterium ulcerans (strain Agy99).